The following is a 462-amino-acid chain: Argininosuccinate lyase (462 aa).

The protein belongs to the lyase 1 family. Argininosuccinate lyase subfamily.

It is found in the cytoplasm. The enzyme catalyses 2-(N(omega)-L-arginino)succinate = fumarate + L-arginine. It functions in the pathway amino-acid biosynthesis; L-arginine biosynthesis; L-arginine from L-ornithine and carbamoyl phosphate: step 3/3. The protein is Argininosuccinate lyase of Bacillus mycoides (strain KBAB4) (Bacillus weihenstephanensis).